The chain runs to 1276 residues: Sterol regulatory element-binding protein cleavage-activating protein (1276 aa).

The Cytoplasmic segment spans residues 1-18; the sequence is MTLTERLREKISQAFYNH. A helical membrane pass occupies residues 19-39; sequence GLLCASYPIPIILFTGLCILA. The Lumenal portion of the chain corresponds to 40–279; the sequence is CCYPLLKLPL…NLVHVHFKEE (240 aa). The tract at residues 46 to 284 is loop-1; sequence KLPLPGTGPV…HFKEEIGIAE (239 aa). The tract at residues 60–81 is disordered; that stretch reads PVKDYSPPPVDSDHKQGEPSEQ. N-linked (GlcNAc...) asparagine glycosylation occurs at Asn-263. A helical transmembrane segment spans residues 280–300; sequence IGIAELIPLVTTYIILFAYIY. Residues 284-442 form the SSD domain; it reads ELIPLVTTYI…MFFFTTVLSI (159 aa). The Cytoplasmic portion of the chain corresponds to 301 to 312; sequence FSTRKIDMVKSK. A helical membrane pass occupies residues 313–333; the sequence is WGLALAAVVTVLSSLLMSVGL. Topologically, residues 334–344 are lumenal; it reads CTLFGLTPTLN. The chain crosses the membrane as a helical span at residues 345-365; it reads GGEIFPYLVVVIGLENVLVLT. Over 366-401 the chain is Cytoplasmic; the sequence is KSVVSTPVDLEVKLRIAQGLSSESWSIMKNVATELG. The helical transmembrane segment at 402–422 threads the bilayer; sequence IILIGYFTLVPAIQEFCLFAV. Position 423 (Val-423) is a topological domain, lumenal. Residues 424 to 444 form a helical membrane-spanning segment; the sequence is GLVSDFFLQMFFFTTVLSIDI. The Cytoplasmic segment spans residues 445 to 518; that stretch reads RRMELADLNK…FLARTRLAQR (74 aa). An ER export signal motif is present at residues 447–452; it reads MELADL. Glycyl lysine isopeptide (Lys-Gly) (interchain with G-Cter in ubiquitin) cross-links involve residues Lys-454 and Lys-466. A helical transmembrane segment spans residues 519–539; sequence LIMAGTVVWIGILVYTDPAGL. The loop-7 stretch occupies residues 535 to 710; sequence DPAGLRTYLA…QAHGDITLYK (176 aa). Topologically, residues 540–708 are lumenal; sequence RTYLAAQVTE…GTQAHGDITL (169 aa). N-linked (GlcNAc...) asparagine glycosylation is found at Asn-590 and Asn-641. Residues 709 to 729 traverse the membrane as a helical segment; sequence YKVAALGLAAGIVLVLLLLCL. Topologically, residues 730–1276 are cytoplasmic; the sequence is YRVLCPRNYG…YVPSVLEKLD (547 aa). Residues 731 to 1276 form an interaction with SREBF2 region; it reads RVLCPRNYGQ…YVPSVLEKLD (546 aa). The WD 1 repeat unit spans residues 771 to 811; that stretch reads VLRGHLMDIECLASDGMLLVSCCLAGQVCVWDAQTGDCLTR. A disordered region spans residues 816 to 903; that stretch reads GSRRDSCGGG…RHRAGCGRAR (88 aa). Ser-821, Ser-837, Ser-843, Ser-850, Ser-905, and Ser-934 each carry phosphoserine. A disordered region spans residues 928-957; the sequence is PALRPPSPGSPLPQASQEDGAAPEKGSPPL. WD repeat units follow at residues 949–999 and 1002–1039; these read APEK…LCCS and EVSS…SLSP. Arg-1048 carries the post-translational modification Omega-N-methylarginine. WD repeat units follow at residues 1074-1111, 1114-1152, 1155-1192, and 1194-1232; these read AHQK…CLFT, GHSG…RVSH, AHRG…KLYS, and QQDL…LLQT.

This sequence belongs to the WD repeat SCAP family. As to quaternary structure, membrane region forms a homotetramer. Component of the SCAP-SREBP complex (composed of SCAP and SREBF1/SREBP1 or SREBF2/SREBP2); interacts with SREBF1/SREBP1 or SREBF2/SREBP2 through its C-terminal cytoplasmic domain. Forms a ternary complex with INSIG1 or INSIG2 through its transmembrane domains at high sterol concentrations. Interacts with PAQR3; the interaction anchors the SCAP-SREBP complex to the Golgi apparatus in low cholesterol conditions. Interacts with the SEC23-SEC24 complex in a SAR1-GTP-dependent manner through an ER export signal in its third cytoplasmic loop. Interacts with RNF139; the interaction inhibits the interaction of SCAP with SEC24B and hampering the ER to Golgi transport of the SCAP-SREBP complex. Interacts with SPRING. Ubiquitinated at Lys-454 and Lys-466. RNF145 triggers ubiquitination of SCAP, likely inhibiting SCAP-SREBP complex transport to the Golgi apparatus and the subsequent processing/maturation of SREBF2/SREBP2.

It is found in the endoplasmic reticulum membrane. The protein localises to the golgi apparatus membrane. It localises to the cytoplasmic vesicle. Its subcellular location is the COPII-coated vesicle membrane. In terms of biological role, escort protein required for cholesterol as well as lipid homeostasis. Regulates export of the SCAP-SREBP complex from the endoplasmic reticulum to the Golgi upon low cholesterol, thereby regulating the processing of sterol regulatory element-binding proteins (SREBPs) SREBF1/SREBP1 and SREBF2/SREBP2. At high sterol concentrations, formation of a ternary complex with INSIG (INSIG1 or INSIG2) leads to mask the ER export signal in SCAP, promoting retention of the complex in the endoplasmic reticulum. Low sterol concentrations trigger release of INSIG, a conformational change in the SSD domain of SCAP, unmasking of the ER export signal, promoting recruitment into COPII-coated vesicles and transport of the SCAP-SREBP to the Golgi: in the Golgi, SREBPs are then processed, releasing the transcription factor fragment of SREBPs from the membrane, its import into the nucleus and up-regulation of LDLR, INSIG1 and the mevalonate pathway. Binds cholesterol via its SSD domain. The chain is Sterol regulatory element-binding protein cleavage-activating protein from Cricetulus griseus (Chinese hamster).